The primary structure comprises 218 residues: GTP cyclohydrolase 1 (218 aa).

Positions 109, 112, and 180 each coordinate Zn(2+).

Belongs to the GTP cyclohydrolase I family. Toroid-shaped homodecamer, composed of two pentamers of five dimers.

It catalyses the reaction GTP + H2O = 7,8-dihydroneopterin 3'-triphosphate + formate + H(+). It functions in the pathway cofactor biosynthesis; 7,8-dihydroneopterin triphosphate biosynthesis; 7,8-dihydroneopterin triphosphate from GTP: step 1/1. The protein is GTP cyclohydrolase 1 of Histophilus somni (strain 129Pt) (Haemophilus somnus).